Reading from the N-terminus, the 2515-residue chain is Probable maltase-glucoamylase 2 (2515 aa).

The Cytoplasmic portion of the chain corresponds to 1–9 (MARKLSVLE). Residues 10 to 30 (VLLIIFCLIVVTIDILLLLLV) form a helical membrane-spanning segment. At 31–482 (LEETSDTSFT…DGVWIEMNEV (452 aa)) the chain is on the lumenal side. A P-type 1 domain is found at 41 to 88 (PECPEIPQSERIDCTPDQEVTEDICRWQYKCCWSPVADANVPRCFFPW). Cystine bridges form between Cys-43-Cys-72, Cys-54-Cys-71, and Cys-65-Cys-84. The tract at residues 152–865 (SHENINLVDG…MDKQPANFIV (714 aa)) is maltase. A glycan (N-linked (GlcNAc...) asparagine) is linked at Asn-167. Tyr-371 is subject to Sulfotyrosine. Asn-421 is a glycosylation site (N-linked (GlcNAc...) asparagine). Residue Glu-478 is the Nucleophile of the active site. Glu-481 is a catalytic residue. 3 disulfide bridges follow: Cys-608/Cys-619, Cys-916/Cys-933, and Cys-928/Cys-946. Asn-613 is a glycosylation site (N-linked (GlcNAc...) asparagine). One can recognise a P-type 2 domain in the interval 904-950 (WNLPVSDLEKFNCYPDDPTASEESCRQRGCLWEDTSTPGVPTCYYDT). Residues 1023–1766 (PLNTPPQPVG…GVNTYVTQVS (744 aa)) form a glucoamylase region. A Sulfotyrosine modification is found at Tyr-1238. Asp-1375 functions as the Nucleophile in the catalytic mechanism. The active site involves Glu-1378. Disordered regions lie at residues 1816 to 1901 (TPTK…PITT), 1994 to 2015 (STTV…STNA), and 2037 to 2091 (TVPD…SSTT). Polar residues predominate over residues 1817–1831 (PTKTSTIPMSSHPSP). Residues 1832–1901 (STTNATSSET…STNATVPITT (70 aa)) are compositionally biased toward low complexity. Asn-2249 carries an N-linked (GlcNAc...) asparagine glycan.

The protein belongs to the glycosyl hydrolase 31 family.

Its subcellular location is the membrane. The catalysed reaction is Hydrolysis of terminal (1-&gt;4)-linked alpha-D-glucose residues successively from non-reducing ends of the chains with release of beta-D-glucose.. The chain is Probable maltase-glucoamylase 2 from Homo sapiens (Human).